The chain runs to 245 residues: Phycocyanobilin:ferredoxin oxidoreductase (245 aa).

It belongs to the HY2 family.

The catalysed reaction is (2R,3Z)-phycocyanobilin + 4 oxidized [2Fe-2S]-[ferredoxin] = biliverdin IXalpha + 4 reduced [2Fe-2S]-[ferredoxin] + 4 H(+). Catalyzes the four-electron reduction of biliverdin IX-alpha (2-electron reduction at both the A and D rings); the reaction proceeds via an isolatable 2-electron intermediate, 181,182-dihydrobiliverdin. Upon overexpression in E.coli with PCB:ferredoxin oxidoreductase, CpeS and either CpcB or PecB permits synthesis of phycocyanin-coupled CpcB or PecB. The protein is Phycocyanobilin:ferredoxin oxidoreductase (pcyA) of Nostoc sp. (strain PCC 7120 / SAG 25.82 / UTEX 2576).